A 103-amino-acid polypeptide reads, in one-letter code: Phosphoribosyl-ATP pyrophosphatase (103 aa).

It belongs to the PRA-PH family.

Its subcellular location is the cytoplasm. It carries out the reaction 1-(5-phospho-beta-D-ribosyl)-ATP + H2O = 1-(5-phospho-beta-D-ribosyl)-5'-AMP + diphosphate + H(+). It participates in amino-acid biosynthesis; L-histidine biosynthesis; L-histidine from 5-phospho-alpha-D-ribose 1-diphosphate: step 2/9. The protein is Phosphoribosyl-ATP pyrophosphatase of Listeria monocytogenes serotype 4b (strain CLIP80459).